The chain runs to 191 residues: Akirin-1 (191 aa).

Residues Leu-17–Pro-70 form a disordered region. The residue at position 22 (Ser-22) is a Phosphoserine. The Nuclear localization signal motif lies at Pro-23 to Cys-28. Residues Leu-31 to Leu-48 are compositionally biased toward pro residues. Over residues Gln-49–Gln-59 the composition is skewed to polar residues. Thr-71 carries the post-translational modification Phosphothreonine. Residues Ser-188–Ser-191 carry the SYVS motif motif.

This sequence belongs to the akirin family. In terms of tissue distribution, expressed in macrophages and satellite cells.

It localises to the nucleus. In terms of biological role, molecular adapter that acts as a bridge between proteins, and which is involved skeletal muscle development. Functions as a signal transducer for MSTN during skeletal muscle regeneration and myogenesis. May regulate chemotaxis of both macrophages and myoblasts by reorganising actin cytoskeleton, leading to more efficient lamellipodia formation via a PI3 kinase dependent pathway. In contrast to AKIRIN2, not involved in nuclear import of proteasomes. This is Akirin-1 from Mus musculus (Mouse).